The following is a 507-amino-acid chain: Maturase K (507 aa).

Belongs to the intron maturase 2 family. MatK subfamily.

Its subcellular location is the plastid. It is found in the chloroplast. In terms of biological role, usually encoded in the trnK tRNA gene intron. Probably assists in splicing its own and other chloroplast group II introns. The protein is Maturase K of Kalmia buxifolia (Sand myrtle).